The primary structure comprises 145 residues: Large ribosomal subunit protein uL13 (145 aa).

The protein belongs to the universal ribosomal protein uL13 family. In terms of assembly, part of the 50S ribosomal subunit.

Its function is as follows. This protein is one of the early assembly proteins of the 50S ribosomal subunit, although it is not seen to bind rRNA by itself. It is important during the early stages of 50S assembly. The polypeptide is Large ribosomal subunit protein uL13 (Bacillus licheniformis (strain ATCC 14580 / DSM 13 / JCM 2505 / CCUG 7422 / NBRC 12200 / NCIMB 9375 / NCTC 10341 / NRRL NRS-1264 / Gibson 46)).